The sequence spans 244 residues: 6-carboxyhexanoate--CoA ligase (244 aa).

It belongs to the BioW family. Homodimer. It depends on Mg(2+) as a cofactor.

It catalyses the reaction heptanedioate + ATP + CoA = 6-carboxyhexanoyl-CoA + AMP + diphosphate. The protein operates within metabolic intermediate metabolism; pimeloyl-CoA biosynthesis; pimeloyl-CoA from pimelate: step 1/1. Catalyzes the transformation of pimelate into pimeloyl-CoA with concomitant hydrolysis of ATP to AMP. The polypeptide is 6-carboxyhexanoate--CoA ligase (Methanococcus maripaludis (strain C6 / ATCC BAA-1332)).